Here is a 654-residue protein sequence, read N- to C-terminus: Mitochondrial-processing peptidase subunit alpha-1 (654 aa).

The disordered stretch occupies residues 73-94; the sequence is SSSSYKGNNNNNNKLSYTTSSN. Residues 381 to 446 adopt a coiled-coil conformation; it reads HKNHLKSQLQ…EQLELQQVKE (66 aa).

It belongs to the peptidase M16 family. Heterodimer of alpha and beta subunits, forming the mitochondrial processing protease (MPP) in which subunit alpha is involved in substrate recognition and binding and subunit beta is the catalytic subunit.

It localises to the mitochondrion matrix. Its function is as follows. Substrate recognition and binding subunit of the essential mitochondrial processing protease (MPP), which cleaves the mitochondrial sequence off newly imported precursors proteins. This chain is Mitochondrial-processing peptidase subunit alpha-1 (mppA1), found in Dictyostelium discoideum (Social amoeba).